The primary structure comprises 532 residues: T-complex protein 1 subunit beta (532 aa).

Belongs to the TCP-1 chaperonin family. As to quaternary structure, heterooligomeric complex of about 850 to 900 kDa that forms two stacked rings, 12 to 16 nm in diameter.

It localises to the cytoplasm. Functionally, molecular chaperone; assists the folding of proteins upon ATP hydrolysis. Known to play a role, in vitro, in the folding of actin and tubulin. This is T-complex protein 1 subunit beta (cct2) from Dictyostelium discoideum (Social amoeba).